The sequence spans 221 residues: Enolase-phosphatase E1 (221 aa).

Mg(2+) is bound by residues Asp9 and Glu11. Substrate-binding positions include 116–117 (SS) and Lys152. Asp180 provides a ligand contact to Mg(2+).

Belongs to the HAD-like hydrolase superfamily. MasA/MtnC family. In terms of assembly, monomer. It depends on Mg(2+) as a cofactor.

The protein resides in the cytoplasm. It localises to the nucleus. The catalysed reaction is 5-methylsulfanyl-2,3-dioxopentyl phosphate + H2O = 1,2-dihydroxy-5-(methylsulfanyl)pent-1-en-3-one + phosphate. Its pathway is amino-acid biosynthesis; L-methionine biosynthesis via salvage pathway; L-methionine from S-methyl-5-thio-alpha-D-ribose 1-phosphate: step 3/6. The protein operates within amino-acid biosynthesis; L-methionine biosynthesis via salvage pathway; L-methionine from S-methyl-5-thio-alpha-D-ribose 1-phosphate: step 4/6. Its function is as follows. Bifunctional enzyme that catalyzes the enolization of 2,3-diketo-5-methylthiopentyl-1-phosphate (DK-MTP-1-P) into the intermediate 2-hydroxy-3-keto-5-methylthiopentenyl-1-phosphate (HK-MTPenyl-1-P), which is then dephosphorylated to form the acireductone 1,2-dihydroxy-3-keto-5-methylthiopentene (DHK-MTPene). The chain is Enolase-phosphatase E1 from Kluyveromyces lactis (strain ATCC 8585 / CBS 2359 / DSM 70799 / NBRC 1267 / NRRL Y-1140 / WM37) (Yeast).